Reading from the N-terminus, the 433-residue chain is Phosphoribosylamine--glycine ligase (433 aa).

An ATP-grasp domain is found at 110–317 (RNFMKKYGIE…FVDIMSAVVK (208 aa)). 137 to 194 (IEKLGDVAVKPSGLTGGKGVKVMGDQLPDLKAAKAYTSELLEKGSVVIEERFIGEEFT) lines the ATP pocket. The Mg(2+) site is built by Gln275, Glu287, and Asn289. Mn(2+) contacts are provided by Gln275, Glu287, and Asn289.

It belongs to the GARS family. Mg(2+) serves as cofactor. Requires Mn(2+) as cofactor.

It catalyses the reaction 5-phospho-beta-D-ribosylamine + glycine + ATP = N(1)-(5-phospho-beta-D-ribosyl)glycinamide + ADP + phosphate + H(+). It functions in the pathway purine metabolism; IMP biosynthesis via de novo pathway; N(1)-(5-phospho-D-ribosyl)glycinamide from 5-phospho-alpha-D-ribose 1-diphosphate: step 2/2. The protein is Phosphoribosylamine--glycine ligase of Methanosarcina barkeri (strain Fusaro / DSM 804).